The following is a 449-amino-acid chain: Phosphoglucosamine mutase (449 aa).

Serine 100 acts as the Phosphoserine intermediate in catalysis. Residues serine 100, aspartate 241, aspartate 243, and aspartate 245 each contribute to the Mg(2+) site. A Phosphoserine modification is found at serine 100.

This sequence belongs to the phosphohexose mutase family. Mg(2+) is required as a cofactor. Post-translationally, activated by phosphorylation.

The catalysed reaction is alpha-D-glucosamine 1-phosphate = D-glucosamine 6-phosphate. Its function is as follows. Catalyzes the conversion of glucosamine-6-phosphate to glucosamine-1-phosphate. The sequence is that of Phosphoglucosamine mutase from Caldicellulosiruptor bescii (strain ATCC BAA-1888 / DSM 6725 / KCTC 15123 / Z-1320) (Anaerocellum thermophilum).